The chain runs to 853 residues: WEB family protein At5g16730, chloroplastic (853 aa).

2 stretches are compositionally biased toward low complexity: residues 1-27 and 36-49; these read MASKTKTSLSETTTTTTPTGKSSPATP and KSETSNNNSPSTTT. A chloroplast-targeting transit peptide spans 1–84; sequence MASKTKTSLS…PTPPEKSQAR (84 aa). Disordered stretches follow at residues 1-106, 386-465, 666-765, and 778-820; these read MASK…IKED, KEDL…SKKA, LAKK…SVEV, and KEAF…ALTA. A compositionally biased stretch (polar residues) spans 92–101; it reads ESPQTTTRLS. Residues 94–670 are a coiled coil; it reads PQTTTRLSQI…LEEAILAKKQ (577 aa). Basic and acidic residues-rich tracts occupy residues 402–465, 698–718, and 732–753; these read EVSK…SKKA, NGHRSVEEKSAKVETLDHEPP, and MEEKEVNGKPEVETEKKEKKDE. Over residues 754-763 the composition is skewed to acidic residues; sequence SQDDDKDDSV. The span at 778-788 shows a compositional bias: basic and acidic residues; sequence KEAFPDKKSEL. Phosphoserine is present on S790. Residues 797-807 are compositionally biased toward basic and acidic residues; the sequence is SSKIDESDKTS.

This sequence belongs to the WEB family.

The protein localises to the plastid. It localises to the chloroplast. The polypeptide is WEB family protein At5g16730, chloroplastic (Arabidopsis thaliana (Mouse-ear cress)).